Consider the following 263-residue polypeptide: 3-methyl-2-oxobutanoate hydroxymethyltransferase (263 aa).

Asp-43 and Asp-82 together coordinate Mg(2+). 3-methyl-2-oxobutanoate is bound by residues 43–44 (DS), Asp-82, and Lys-111. Glu-113 is a Mg(2+) binding site. Catalysis depends on Glu-179, which acts as the Proton acceptor.

The protein belongs to the PanB family. Homodecamer; pentamer of dimers. The cofactor is Mg(2+).

The protein localises to the cytoplasm. It catalyses the reaction 3-methyl-2-oxobutanoate + (6R)-5,10-methylene-5,6,7,8-tetrahydrofolate + H2O = 2-dehydropantoate + (6S)-5,6,7,8-tetrahydrofolate. Its pathway is cofactor biosynthesis; (R)-pantothenate biosynthesis; (R)-pantoate from 3-methyl-2-oxobutanoate: step 1/2. In terms of biological role, catalyzes the reversible reaction in which hydroxymethyl group from 5,10-methylenetetrahydrofolate is transferred onto alpha-ketoisovalerate to form ketopantoate. The chain is 3-methyl-2-oxobutanoate hydroxymethyltransferase from Neisseria gonorrhoeae (strain ATCC 700825 / FA 1090).